The following is an 84-amino-acid chain: Small ribosomal subunit protein uS17 (84 aa).

It belongs to the universal ribosomal protein uS17 family. In terms of assembly, part of the 30S ribosomal subunit.

One of the primary rRNA binding proteins, it binds specifically to the 5'-end of 16S ribosomal RNA. The polypeptide is Small ribosomal subunit protein uS17 (Histophilus somni (strain 129Pt) (Haemophilus somnus)).